The sequence spans 392 residues: PMA1 stabilization in the Golgi protein 1 (392 aa).

The first 22 residues, 1-22, serve as a signal peptide directing secretion; the sequence is MRFHDSILIFFSLASLYQHVHG. O-linked (Man) threonine glycans are attached at residues Thr34 and Thr35. The O-linked (Man) serine glycan is linked to Ser36. Thr45 carries O-linked (Man) threonine glycosylation. O-linked (Man) serine glycosylation is present at Ser49. 3 O-linked (Man) threonine glycosylation sites follow: Thr55, Thr57, and Thr63. A glycan (O-linked (Man) serine) is linked at Ser65. O-linked (Man) threonine glycosylation is present at Thr71. The O-linked (Man) serine glycan is linked to Ser80. Thr89 and Thr99 each carry an O-linked (Man) threonine glycan. Ser107 carries an O-linked (Man) serine glycan. O-linked (Man) threonine glycans are attached at residues Thr108 and Thr112. O-linked (Man) serine glycans are attached at residues Ser114 and Ser115. The O-linked (Man) threonine glycan is linked to Thr117. O-linked (Man) serine glycans are attached at residues Ser119 and Ser148. O-linked (Man) threonine glycosylation occurs at Thr156. Ser171 carries an O-linked (Man) serine glycan. Thr176 carries O-linked (Man) threonine glycosylation. O-linked (Man) serine glycosylation occurs at Ser181. O-linked (Man) threonine glycans are attached at residues Thr188, Thr192, Thr195, and Thr199. Ser203 and Ser215 each carry an O-linked (Man) serine glycan. At 230 to 317 the chain is on the lumenal side; that stretch reads DIPATFFSSE…DAGITNDQWY (88 aa). A helical membrane pass occupies residues 318 to 338; the sequence is YVALSIPTVVVVFFVFMYFFL. Topologically, residues 339–392 are cytoplasmic; sequence YVNGKNRDFTDVTRKALNKKRRVLGKFSEMKKFKNMKNHKYTELPSYKKTSKQN.

In terms of assembly, interacts with EXP1. PSG1-N' interacts with ERAD-related proteins involved in PMA1 quality control including EPS1, CDC48, UBX2 and SSM4. PSG1-C' interacts with the TLG1/2 SNARE complex proteins TLG1, TLG2 and VTI1. Post-translationally, the precursor protein is cleaved into two polypeptide chains, PSG1-N' and PSG1-C'. The cleavage is performed in the Golgi apparatus by Ca(+)-dependent serine protease KEX2 between Arg-229 and Asp-230. In terms of processing, PSG1-N' is highly O-mannosylated.

The protein resides in the golgi apparatus lumen. Its subcellular location is the cytoplasmic vesicle. It is found in the COPI-coated vesicle membrane. Functionally, with EXP1, the specific cargo receptor protein for the plasma membrane ATPase PMA1, is involved in the transport and/or maturation of PMA1. EXP1 and PSG1 probably act sequentially to promote PMA1 sorting between the ER and the Golgi, with EXP1 promoting PMA1 export from the ER to the Golgi while PSG1 has a role in PMA1 maturation or quality control in the Golgi. PSG1 might also couple PMA1 sorting and maturation in the early secretory pathway with the glycosylation machinery. PSG1 is cleaved by KEX2 in two stable peptides, PSG1-N' and PSG1-C', the former supporting a role in maturation quality control, the latter having a role in modulating vesicular trafficking. The protein is PMA1 stabilization in the Golgi protein 1 of Saccharomyces cerevisiae (strain ATCC 204508 / S288c) (Baker's yeast).